The following is a 260-amino-acid chain: Hydroxyacylglutathione hydrolase (260 aa).

Zn(2+)-binding residues include histidine 61, histidine 63, aspartate 65, histidine 66, histidine 119, aspartate 138, and histidine 176.

The protein belongs to the metallo-beta-lactamase superfamily. Glyoxalase II family. In terms of assembly, monomer. The cofactor is Zn(2+).

It catalyses the reaction an S-(2-hydroxyacyl)glutathione + H2O = a 2-hydroxy carboxylate + glutathione + H(+). Its pathway is secondary metabolite metabolism; methylglyoxal degradation; (R)-lactate from methylglyoxal: step 2/2. Its function is as follows. Thiolesterase that catalyzes the hydrolysis of S-D-lactoyl-glutathione to form glutathione and D-lactic acid. The sequence is that of Hydroxyacylglutathione hydrolase from Brucella anthropi (strain ATCC 49188 / DSM 6882 / CCUG 24695 / JCM 21032 / LMG 3331 / NBRC 15819 / NCTC 12168 / Alc 37) (Ochrobactrum anthropi).